Here is a 217-residue protein sequence, read N- to C-terminus: Probable GTP-binding protein EngB (217 aa).

The region spanning 40–217 (DVPEIAFAGR…RAAVLQDAMG (178 aa)) is the EngB-type G domain. GTP-binding positions include 48 to 55 (GRSNVGKS), 75 to 79 (GRTQE), 95 to 98 (DMPG), 162 to 165 (TKAD), and 196 to 198 (TSS). Mg(2+) is bound by residues S55 and T77.

The protein belongs to the TRAFAC class TrmE-Era-EngA-EngB-Septin-like GTPase superfamily. EngB GTPase family. It depends on Mg(2+) as a cofactor.

Necessary for normal cell division and for the maintenance of normal septation. This chain is Probable GTP-binding protein EngB, found in Novosphingobium aromaticivorans (strain ATCC 700278 / DSM 12444 / CCUG 56034 / CIP 105152 / NBRC 16084 / F199).